The primary structure comprises 173 residues: Alpha-crystallin A chain (173 aa).

Position 1 is an N-acetylmethionine (M1). The interval 1–63 is required for complex formation with BFSP1 and BFSP2; sequence MDITIQHPWF…RTVLESGISE (63 aa). Deamidated glutamine; partial is present on Q6. S45 bears the Phosphoserine mark. Q50 is subject to Deamidated glutamine; partial. In terms of domain architecture, sHSP spans 52–164; sequence LFRTVLESGI…SDRSIPVSRE (113 aa). 2 positions are modified to N6-acetyllysine: K70 and K99. Residues H100, E102, and H107 each coordinate Zn(2+). S122 is subject to Phosphoserine. A Deamidated asparagine; partial modification is found at N123. Residues 146-167 show a composition bias toward basic and acidic residues; it reads IHSDMDASHSDRSIPVSREEKP. Residues 146 to 173 form a disordered region; the sequence is IHSDMDASHSDRSIPVSREEKPTLAPSS. Residue H154 coordinates Zn(2+). S162 carries an O-linked (GlcNAc) serine glycan.

This sequence belongs to the small heat shock protein (HSP20) family. In terms of assembly, heteromer composed of three CRYAA and one CRYAB subunits. Inter-subunit bridging via zinc ions enhances stability, which is crucial as there is no protein turn over in the lens. Can also form homodimers and homotetramers (dimers of dimers) which serve as the building blocks of homooligomers. Within homooligomers, the zinc-binding motif is created from residues of 3 different molecules. His-100 and Glu-102 from one molecule are ligands of the zinc ion, and His-107 and His-154 residues from additional molecules complete the site with tetrahedral coordination geometry. Part of a complex required for lens intermediate filament formation composed of BFSP1, BFSP2 and CRYAA. Acetylation at Lys-70 may increase chaperone activity. In terms of processing, undergoes age-dependent proteolytical cleavage at the C-terminus.

The protein resides in the cytoplasm. The protein localises to the nucleus. In terms of biological role, contributes to the transparency and refractive index of the lens. Acts as a chaperone, preventing aggregation of various proteins under a wide range of stress conditions. Required for the correct formation of lens intermediate filaments as part of a complex composed of BFSP1, BFSP2 and CRYAA. The sequence is that of Alpha-crystallin A chain (CRYAA) from Osphranter rufus (Red kangaroo).